The following is a 118-amino-acid chain: Large ribosomal subunit protein bL20 (118 aa).

It belongs to the bacterial ribosomal protein bL20 family.

Its function is as follows. Binds directly to 23S ribosomal RNA and is necessary for the in vitro assembly process of the 50S ribosomal subunit. It is not involved in the protein synthesizing functions of that subunit. The polypeptide is Large ribosomal subunit protein bL20 (Staphylococcus aureus (strain Mu3 / ATCC 700698)).